Here is a 483-residue protein sequence, read N- to C-terminus: MLTLDTLNTMLAVSEEGMVEEMILALLASPQLVIFFEKFPRLKNAVTADLPRWREALRSRLKDARVPPELTEEVMCYQQSQLLSTPQFIVQLPQILALLHRLHSPYAAQAKQLTESNSTFTPALHTLFLQRWRLSLVVQATTLNQQLLEEEREQLLSDVQERMTLSGQLEPTLAENDNAAGRLWDMSTGQLKRGDYQLIVKYGEFLAAQPELMQLAEQLGRSREAKSVPKKDAPMETFRTLVREPATVPEQVDGIQQGDDILRLLPPELAALGITELEYEFYRRLVEKQLLTYRLHGEAWREKVTERPVVHQDVDEQPRGPFIVCVDTSGSMGGFNEQCAKAFCLALMRVALADNRRCFIMLFSTDVVRYELSGPEGIEQAIRFLSQRFRGGTDIASCFRAIIERMQGREWFDADAVVISDFIAQRLPDDVVSKVGELQRLHQHRFHAVAMSAHGKPGIMRIFDHIWRFDTGMRSRLLRRWRR.

It belongs to the ViaA family. In terms of assembly, homodimer. Interacts with RavA.

The protein resides in the cytoplasm. In terms of biological role, component of the RavA-ViaA chaperone complex, which may act on the membrane to optimize the function of some of the respiratory chains. ViaA stimulates the ATPase activity of RavA. In Salmonella choleraesuis (strain SC-B67), this protein is Regulatory protein ViaA.